We begin with the raw amino-acid sequence, 765 residues long: Single-minded homolog 1 (765 aa).

The region spanning 1–53 (MKEKSKNAARTRREKENSEFYELAKLLPLPSAITSQLDKASIIRLTTSYLKMR) is the bHLH domain. 2 PAS domains span residues 77–147 (GREL…QPYH) and 218–288 (PPSA…LVKG). The PAC domain maps to 292–335 (TKYYRFLAKQGGWVWVQSYATIVHNSRSSRPHCIVSVNYVLTDT). One can recognise a Single-minded C-terminal domain in the interval 336 to 765 (EYKGLQLSLD…GTSVIITNGS (430 aa)). Composition is skewed to low complexity over residues 352-365 (PTFS…PTIS) and 373-385 (SRLS…SRTS). Disordered stretches follow at residues 352–428 (PTFS…PGSQ) and 527–560 (WDED…PHEP). The short motif at 368-387 (RKGAKSRLSSSKSKSRTSPY) is the Nuclear localization signal element. The segment covering 394–404 (HTERSESDHDS) has biased composition (basic and acidic residues).

As to quaternary structure, efficient DNA binding requires dimerization with another bHLH protein. Heterodimer; forms a heterodimer with ARNT, ARNT2. In terms of tissue distribution, detected in lung, skeletal muscle and kidney. During fetal development it is found in the CNS, developing kidney, mesodermal and endodermal tissues, including developing somites, mesonephric duct, and foregut.

The protein localises to the nucleus. Transcriptional factor that may have pleiotropic effects during embryogenesis and in the adult. The sequence is that of Single-minded homolog 1 (Sim1) from Mus musculus (Mouse).